The sequence spans 470 residues: Ras-like GTPase HI_1637 (470 aa).

The short motif at 27–34 is the Walker A motif element; that stretch reads GLSRSGKT. Residues S29, G32, K33, T34, A35, W98, S101, T102, R103, K342, D344, and H345 each coordinate GTP. Residues G32, K33, T34, A35, W98, S101, and T102 each coordinate GDP. The GDP site is built by K342, D344, H345, A383, and V384. Residue V384 participates in GTP binding.

It to E.coli YcjX. In terms of assembly, monomer in solution. Mg(2+) is required as a cofactor.

It carries out the reaction GTP + H2O = GDP + phosphate + H(+). Its activity is regulated as follows. Alternates between an inactive form bound to GDP and an active form bound to GTP. Likely activated by a guanine nucleotide-exchange factor (GEF). Its function is as follows. Binds GTP and GDP. Has intrinsic GTPase activity. Does not hydrolyze ATP. May act as a transducer of stress responses. The sequence is that of Ras-like GTPase HI_1637 from Haemophilus influenzae (strain ATCC 51907 / DSM 11121 / KW20 / Rd).